The primary structure comprises 457 residues: Ribosomal protein uS12 methylthiotransferase RimO (457 aa).

The region spanning 30-140 (PTIGMVSLGC…VLDAVHGAVP (111 aa)) is the MTTase N-terminal domain. Residues C39, C75, C104, C171, C175, and C178 each coordinate [4Fe-4S] cluster. One can recognise a Radical SAM core domain in the interval 157–386 (LTPRHFSYLK…MQKAQAISEA (230 aa)). The region spanning 389 to 456 (AARIGQRLEV…EYDLWGRAVL (68 aa)) is the TRAM domain.

It belongs to the methylthiotransferase family. RimO subfamily. [4Fe-4S] cluster serves as cofactor.

Its subcellular location is the cytoplasm. The catalysed reaction is L-aspartate(89)-[ribosomal protein uS12]-hydrogen + (sulfur carrier)-SH + AH2 + 2 S-adenosyl-L-methionine = 3-methylsulfanyl-L-aspartate(89)-[ribosomal protein uS12]-hydrogen + (sulfur carrier)-H + 5'-deoxyadenosine + L-methionine + A + S-adenosyl-L-homocysteine + 2 H(+). Catalyzes the methylthiolation of an aspartic acid residue of ribosomal protein uS12. This chain is Ribosomal protein uS12 methylthiotransferase RimO, found in Cereibacter sphaeroides (strain ATCC 17025 / ATH 2.4.3) (Rhodobacter sphaeroides).